The following is a 334-amino-acid chain: Holliday junction branch migration complex subunit RuvB (334 aa).

Residues 4-184 form a large ATPase domain (RuvB-L) region; the sequence is ADRIISPNAT…FGIVQRLEFY (181 aa). Residues Ile23, Arg24, Gly65, Lys68, Thr69, Thr70, 131-133, Arg174, Tyr184, and Arg221 contribute to the ATP site; that span reads EDY. Thr69 is a binding site for Mg(2+). The interval 185 to 255 is small ATPAse domain (RuvB-S); sequence SVEDLRHIVA…VADKALNMLN (71 aa). Residues 258–334 are head domain (RuvB-H); it reads LHGFDHMDRR…YNHFGLTMPE (77 aa). DNA-binding residues include Arg313 and Arg318.

The protein belongs to the RuvB family. In terms of assembly, homohexamer. Forms an RuvA(8)-RuvB(12)-Holliday junction (HJ) complex. HJ DNA is sandwiched between 2 RuvA tetramers; dsDNA enters through RuvA and exits via RuvB. An RuvB hexamer assembles on each DNA strand where it exits the tetramer. Each RuvB hexamer is contacted by two RuvA subunits (via domain III) on 2 adjacent RuvB subunits; this complex drives branch migration. In the full resolvosome a probable DNA-RuvA(4)-RuvB(12)-RuvC(2) complex forms which resolves the HJ.

The protein localises to the cytoplasm. It carries out the reaction ATP + H2O = ADP + phosphate + H(+). The RuvA-RuvB-RuvC complex processes Holliday junction (HJ) DNA during genetic recombination and DNA repair, while the RuvA-RuvB complex plays an important role in the rescue of blocked DNA replication forks via replication fork reversal (RFR). RuvA specifically binds to HJ cruciform DNA, conferring on it an open structure. The RuvB hexamer acts as an ATP-dependent pump, pulling dsDNA into and through the RuvAB complex. RuvB forms 2 homohexamers on either side of HJ DNA bound by 1 or 2 RuvA tetramers; 4 subunits per hexamer contact DNA at a time. Coordinated motions by a converter formed by DNA-disengaged RuvB subunits stimulates ATP hydrolysis and nucleotide exchange. Immobilization of the converter enables RuvB to convert the ATP-contained energy into a lever motion, pulling 2 nucleotides of DNA out of the RuvA tetramer per ATP hydrolyzed, thus driving DNA branch migration. The RuvB motors rotate together with the DNA substrate, which together with the progressing nucleotide cycle form the mechanistic basis for DNA recombination by continuous HJ branch migration. Branch migration allows RuvC to scan DNA until it finds its consensus sequence, where it cleaves and resolves cruciform DNA. This Hahella chejuensis (strain KCTC 2396) protein is Holliday junction branch migration complex subunit RuvB.